We begin with the raw amino-acid sequence, 251 residues long: Adapter protein MecA (251 aa).

It belongs to the MecA family. As to quaternary structure, homodimer.

Enables the recognition and targeting of unfolded and aggregated proteins to the ClpC protease or to other proteins involved in proteolysis. The chain is Adapter protein MecA from Streptococcus agalactiae serotype III (strain NEM316).